The sequence spans 407 residues: Probable tRNA sulfurtransferase (407 aa).

A THUMP domain is found at 61-165 (NEITYRLSKI…LDAIYMYEEV (105 aa)). ATP-binding positions include 183 to 184 (ML), 208 to 209 (HF), arginine 265, glycine 287, and glutamine 296.

Belongs to the ThiI family.

The protein localises to the cytoplasm. It carries out the reaction [ThiI sulfur-carrier protein]-S-sulfanyl-L-cysteine + a uridine in tRNA + 2 reduced [2Fe-2S]-[ferredoxin] + ATP + H(+) = [ThiI sulfur-carrier protein]-L-cysteine + a 4-thiouridine in tRNA + 2 oxidized [2Fe-2S]-[ferredoxin] + AMP + diphosphate. It catalyses the reaction [ThiS sulfur-carrier protein]-C-terminal Gly-Gly-AMP + S-sulfanyl-L-cysteinyl-[cysteine desulfurase] + AH2 = [ThiS sulfur-carrier protein]-C-terminal-Gly-aminoethanethioate + L-cysteinyl-[cysteine desulfurase] + A + AMP + 2 H(+). Its pathway is cofactor biosynthesis; thiamine diphosphate biosynthesis. Functionally, catalyzes the ATP-dependent transfer of a sulfur to tRNA to produce 4-thiouridine in position 8 of tRNAs, which functions as a near-UV photosensor. Also catalyzes the transfer of sulfur to the sulfur carrier protein ThiS, forming ThiS-thiocarboxylate. This is a step in the synthesis of thiazole, in the thiamine biosynthesis pathway. The sulfur is donated as persulfide by IscS. The chain is Probable tRNA sulfurtransferase from Staphylococcus aureus (strain JH1).